Consider the following 145-residue polypeptide: UPF0201 protein LS215_1276 (145 aa).

The protein belongs to the UPF0201 family.

This chain is UPF0201 protein LS215_1276, found in Saccharolobus islandicus (strain L.S.2.15 / Lassen #1) (Sulfolobus islandicus).